The primary structure comprises 118 residues: V-type proton ATPase subunit G 3 (118 aa).

Residues 1 to 34 are disordered; sequence MTSQSQGIHQLLQAEKRAKDKLEEAKKRKGKRLK. Residues 5–54 are a coiled coil; it reads SQGIHQLLQAEKRAKDKLEEAKKRKGKRLKQAKEEAMVEIDQYRMQRDKE. A compositionally biased stretch (basic and acidic residues) spans 14 to 26; that stretch reads AEKRAKDKLEEAK.

The protein belongs to the V-ATPase G subunit family. As to quaternary structure, V-ATPase is a heteromultimeric enzyme made up of two complexes: the ATP-hydrolytic V1 complex and the proton translocation V0 complex. The V1 complex consists of three catalytic AB heterodimers that form a heterohexamer, three peripheral stalks each consisting of EG heterodimers, one central rotor including subunits D and F, and the regulatory subunits C and H. The proton translocation complex V0 consists of the proton transport subunit a, a ring of proteolipid subunits c9c'', rotary subunit d, subunits e and f, and the accessory subunits ATP6AP1/Ac45 and ATP6AP2/PRR. In terms of tissue distribution, kidney.

Functionally, subunit of the V1 complex of vacuolar(H+)-ATPase (V-ATPase), a multisubunit enzyme composed of a peripheral complex (V1) that hydrolyzes ATP and a membrane integral complex (V0) that translocates protons. V-ATPase is responsible for acidifying and maintaining the pH of intracellular compartments and in some cell types, is targeted to the plasma membrane, where it is responsible for acidifying the extracellular environment. This chain is V-type proton ATPase subunit G 3 (ATP6V1G3), found in Homo sapiens (Human).